The following is a 513-amino-acid chain: Putative ATP-dependent RNA helicase QP509L (513 aa).

The Helicase ATP-binding domain maps to 110–262 (KKLLSPYGRF…KIIIHHLGQP (153 aa)). 123 to 130 (LNTGLGKT) contacts ATP. Positions 215 to 218 (DEAH) match the DEAH box motif.

It belongs to the DEAD box helicase family. DEAH subfamily.

It carries out the reaction ATP + H2O = ADP + phosphate + H(+). The sequence is that of Putative ATP-dependent RNA helicase QP509L from Ornithodoros (relapsing fever ticks).